A 439-amino-acid polypeptide reads, in one-letter code: Mitochondrial distribution and morphology protein 12 (439 aa).

The SMP-LTD domain maps to 1 to 439; the sequence is MSIDVNWRFA…VYPSFWTFLI (439 aa). Disordered regions lie at residues 70–103, 185–274, and 354–386; these read YEED…LNEP, GWSD…PPRM, and PEQQ…RHGG. Positions 78 to 91 are enriched in basic and acidic residues; the sequence is TSDASEERGEEHSS. The span at 215-245 shows a compositional bias: polar residues; sequence DTSNSTSRPSTANTLPSHPSGSSKNSGQAAT. Composition is skewed to basic and acidic residues over residues 247–261 and 362–371; these read RNDH…HLED and SAGDDHRPQS.

It belongs to the MDM12 family. Component of the ER-mitochondria encounter structure (ERMES) or MDM complex, composed of mmm1, mdm10, mdm12 and mdm34. A mmm1 homodimer associates with one molecule of mdm12 on each side in a pairwise head-to-tail manner, and the SMP-LTD domains of mmm1 and mdm12 generate a continuous hydrophobic tunnel for phospholipid trafficking.

The protein localises to the mitochondrion outer membrane. It is found in the endoplasmic reticulum membrane. Component of the ERMES/MDM complex, which serves as a molecular tether to connect the endoplasmic reticulum (ER) and mitochondria. Components of this complex are involved in the control of mitochondrial shape and protein biogenesis, and function in nonvesicular lipid trafficking between the ER and mitochondria. Mdm12 is required for the interaction of the ER-resident membrane protein mmm1 and the outer mitochondrial membrane-resident beta-barrel protein mdm10. The mdm12-mmm1 subcomplex functions in the major beta-barrel assembly pathway that is responsible for biogenesis of all mitochondrial outer membrane beta-barrel proteins, and acts in a late step after the SAM complex. The mdm10-mdm12-mmm1 subcomplex further acts in the TOM40-specific pathway after the action of the mdm12-mmm1 complex. Essential for establishing and maintaining the structure of mitochondria and maintenance of mtDNA nucleoids. The protein is Mitochondrial distribution and morphology protein 12 of Aspergillus fumigatus (strain CBS 144.89 / FGSC A1163 / CEA10) (Neosartorya fumigata).